A 390-amino-acid polypeptide reads, in one-letter code: S-adenosylmethionine synthase 1 (390 aa).

Residue Glu9 participates in Mg(2+) binding. His15 serves as a coordination point for ATP. Position 43 (Glu43) interacts with K(+). Residues Glu56 and Gln99 each coordinate L-methionine. Residues 167–169, 235–238, Asp246, 252–253, Ala269, Lys273, and Lys277 contribute to the ATP site; these read DGK, SGRF, and RK. Asp246 lines the L-methionine pocket. Lys277 provides a ligand contact to L-methionine.

Belongs to the AdoMet synthase family. In terms of assembly, homotetramer. Requires Mn(2+) as cofactor. It depends on Mg(2+) as a cofactor. The cofactor is Co(2+). K(+) is required as a cofactor.

Its subcellular location is the cytoplasm. The enzyme catalyses L-methionine + ATP + H2O = S-adenosyl-L-methionine + phosphate + diphosphate. The protein operates within amino-acid biosynthesis; S-adenosyl-L-methionine biosynthesis; S-adenosyl-L-methionine from L-methionine: step 1/1. In terms of biological role, catalyzes the formation of S-adenosylmethionine from methionine and ATP. The reaction comprises two steps that are both catalyzed by the same enzyme: formation of S-adenosylmethionine (AdoMet) and triphosphate, and subsequent hydrolysis of the triphosphate. The sequence is that of S-adenosylmethionine synthase 1 (SAM1) from Petunia hybrida (Petunia).